Consider the following 383-residue polypeptide: Putative type I specificity subunit S.MgeORF438P (383 aa).

The interval 1–142 is TRD1; that stretch reads MTPKLKLNNN…KELEIPFTSN (142 aa). The tract at residues 143 to 182 is conserved region 1; the sequence is KNEQHAIANTLSVFDERLENLASLIEINRKLRDEYAHKLF. Residues 143-182 are a coiled coil; it reads KNEQHAIANTLSVFDERLENLASLIEINRKLRDEYAHKLF. A TRD2 region spans residues 183–330; that stretch reads SLDEAFLSHW…GEIKVPYVKS (148 aa). Residues 331–370 form a conserved region 2 region; that stretch reads FQLQRKAGKIVFLLDQKLDQYKKELSSLTVIRDTLLKKLF. A coiled-coil region spans residues 331–370; sequence FQLQRKAGKIVFLLDQKLDQYKKELSSLTVIRDTLLKKLF.

The protein belongs to the type-I restriction system S methylase family.

Its function is as follows. The specificity (S) subunit of a type I restriction enzyme; this subunit dictates DNA sequence specificity. This bacterium does not encode the associated endonuclease or methylase subunits. This Mycoplasma genitalium (strain ATCC 33530 / DSM 19775 / NCTC 10195 / G37) (Mycoplasmoides genitalium) protein is Putative type I specificity subunit S.MgeORF438P.